The primary structure comprises 108 residues: Inner membrane protein H108R (108 aa).

The helical transmembrane segment at 10–32 (LIVIITILITTRELSTTMLIVSL) threads the bilayer. Positions 49–64 (ENNTFSMPQKNSFSES) are enriched in polar residues. A disordered region spans residues 49 to 69 (ENNTFSMPQKNSFSESYNKDK). A glycan (N-linked (GlcNAc...) asparagine; by host) is linked at asparagine 50.

It belongs to the asfivirus H108R family.

The protein localises to the virion membrane. This chain is Inner membrane protein H108R, found in Ornithodoros (relapsing fever ticks).